The following is a 606-amino-acid chain: MSLCRLLLMLAMCCGVSRGSQTLPAGGRRGQRRRDNSAQWSTQQRPEGAVGPAPLTDVVTAAGTRTVPDVDQAGAVLVRQYNLVTSPLGLATLGSTNALLYAAPVSPLMPLQDGTTSNIMSTESSNYAQYRVQGLTVRWRPVVPNAVGGFSISMAYWPQTTSTPTSIDMNSITSTDVRVVLQPGSAGLLTIPHERLAYKNNGWRSVETVSVPQEDATSGMLMVCVHGTPWNSYTNSVYTGPLGMVDFAIKLQLRNLSPGNTNARVTRVKVTAPHTIKADPSGATITTAAAARFMADVRWGLGTAEDGEIGHGILGVLFNLADTVLGGLPSTLLRAASGQYMYGRPVGNANGEPEVKLYMSVEDAVNDKPIMVPHDIDLGTSTVTCQDYGNQHVDDRPSPAPAPKRALGTLRSGDVLRITGSMQYVTNAELLPQSVSQGYFGAGSTMMVHNLITGVRAPASSVDWTKATVDGVQVKTVDASSGSNRFAALPAFGKPAVWGPQGAGYFYQYNSTHQEWIYFLQNGSSVVWYAYTNMLGQKSDTSILFEVRPIQASDQPWFLAHHTGGDDCTTCLPLGLRTCCRQAPEDQSPETRRLLDRLSRTFPSPP.

Positions 1 to 19 (MSLCRLLLMLAMCCGVSRG) are cleaved as a signal peptide. The segment at 22-54 (TLPAGGRRGQRRRDNSAQWSTQQRPEGAVGPAP) is disordered. Positions 28–34 (RRGQRRR) match the Nuclear localization signal motif. N-linked (GlcNAc...) asparagine; by host glycosylation is present at Asn255. Residues 313-339 (ILGVLFNLADTVLGGLPSTLLRAASGQ) form a particle formation region. An N-linked (GlcNAc...) asparagine; by host glycan is attached at Asn510.

This sequence belongs to the hepevirus capsid protein family. As to quaternary structure, homodimer. Self-assembles to form the capsid. The capsid is dominated by dimers that define the 30 morphological units. Interacts with phosphorylated protein ORF3. Post-translationally, N-glycosylated.

It is found in the secreted. It localises to the virion. Its subcellular location is the host cytoplasm. The protein resides in the host endoplasmic reticulum. The protein localises to the host Golgi apparatus. It is found in the host cell surface. It localises to the host nucleus. Functionally, plays a role in the inhibition of host antibody-mediated neutralization without blocking viral cell entry. Forms an icosahedral capsid with a T=1 symmetry and a 34 nm diameter. The capsid is composed of 60 copies linked to each other. Binds to the 5' end of the genomic RNA to mediate genome encapsidation. This Gallus gallus (Chicken) protein is Pro-secreted protein ORF2.